The following is a 390-amino-acid chain: Deoxyhypusine synthase-like protein (390 aa).

The protein belongs to the deoxyhypusine synthase family.

The chain is Deoxyhypusine synthase-like protein from Nostoc punctiforme (strain ATCC 29133 / PCC 73102).